The chain runs to 364 residues: Paraneoplastic antigen Ma2 homolog (364 aa).

Ala-2 is subject to N-acetylalanine. The span at 335-351 shows a compositional bias: acidic residues; the sequence is EEEEATFENENTEEPEG. Residues 335–364 are disordered; sequence EEEEATFENENTEEPEGGDGYGHWGNEAND.

Belongs to the PNMA family.

It localises to the nucleus. The protein resides in the nucleolus. The polypeptide is Paraneoplastic antigen Ma2 homolog (PNMA2) (Bos taurus (Bovine)).